We begin with the raw amino-acid sequence, 318 residues long: Transaldolase (318 aa).

The Schiff-base intermediate with substrate role is filled by Lys-132.

The protein belongs to the transaldolase family. Type 1 subfamily. In terms of assembly, homodimer.

Its subcellular location is the cytoplasm. It carries out the reaction D-sedoheptulose 7-phosphate + D-glyceraldehyde 3-phosphate = D-erythrose 4-phosphate + beta-D-fructose 6-phosphate. It functions in the pathway carbohydrate degradation; pentose phosphate pathway; D-glyceraldehyde 3-phosphate and beta-D-fructose 6-phosphate from D-ribose 5-phosphate and D-xylulose 5-phosphate (non-oxidative stage): step 2/3. Functionally, transaldolase is important for the balance of metabolites in the pentose-phosphate pathway. In Shewanella sp. (strain MR-4), this protein is Transaldolase.